The chain runs to 228 residues: FAS1 domain-containing protein NCU02579 (228 aa).

Residues 1–18 form the signal peptide; sequence MRFTPYLVLAPTAAVAFA. The tract at residues 50-74 is disordered; that stretch reads PAVGLGPAMPPSGAPQADGPANAGG. Residues 77 to 225 enclose the FAS1 domain; sequence SVMLSDVMGR…GEVWILKGVR (149 aa).

The protein resides in the vacuole. This chain is FAS1 domain-containing protein NCU02579, found in Neurospora crassa (strain ATCC 24698 / 74-OR23-1A / CBS 708.71 / DSM 1257 / FGSC 987).